We begin with the raw amino-acid sequence, 87 residues long: uncharacterized protein (87 aa).

The 2Fe-2S ferredoxin-type domain occupies 4–87; the sequence is SKIIILNNNK…TISGSILIKI (84 aa). Positions 39, 44, 47, and 75 each coordinate [2Fe-2S] cluster.

It depends on [2Fe-2S] cluster as a cofactor.

This is an uncharacterized protein from Buchnera aphidicola subsp. Baizongia pistaciae (strain Bp).